Reading from the N-terminus, the 413-residue chain is Serine protease inhibitor A3L (413 aa).

The first 28 residues, 1–28 (MAFIAALGLLMAGICPAVLCDGTLGRDT), serve as a signal peptide directing secretion. Ser30 bears the Phosphoserine mark. Residues Asn102, Asn182, Asn220, and Asn267 are each glycosylated (N-linked (GlcNAc...) asparagine). The RCL stretch occupies residues 365–389 (GTEATAATGVATVIRRQPRTLNFNR).

This sequence belongs to the serpin family. In terms of processing, N-glycosylated. In terms of tissue distribution, liver.

The protein localises to the secreted. The protein is Serine protease inhibitor A3L (Serpina3l) of Rattus norvegicus (Rat).